A 361-amino-acid chain; its full sequence is Chorismate synthase (361 aa).

Arg48 and Arg54 together coordinate NADP(+). FMN-binding positions include 125-127 (RSS), 238-239 (NA), Gly278, 293-297 (KPTSS), and Arg319.

Belongs to the chorismate synthase family. In terms of assembly, homotetramer. It depends on FMNH2 as a cofactor.

It catalyses the reaction 5-O-(1-carboxyvinyl)-3-phosphoshikimate = chorismate + phosphate. It participates in metabolic intermediate biosynthesis; chorismate biosynthesis; chorismate from D-erythrose 4-phosphate and phosphoenolpyruvate: step 7/7. Functionally, catalyzes the anti-1,4-elimination of the C-3 phosphate and the C-6 proR hydrogen from 5-enolpyruvylshikimate-3-phosphate (EPSP) to yield chorismate, which is the branch point compound that serves as the starting substrate for the three terminal pathways of aromatic amino acid biosynthesis. This reaction introduces a second double bond into the aromatic ring system. In Citrobacter koseri (strain ATCC BAA-895 / CDC 4225-83 / SGSC4696), this protein is Chorismate synthase.